Reading from the N-terminus, the 127-residue chain is Glycine cleavage system H protein (127 aa).

Residues 22-104 (EVVIGITHFA…YEGAWMVKVE (83 aa)) enclose the Lipoyl-binding domain. The residue at position 63 (K63) is an N6-lipoyllysine.

This sequence belongs to the GcvH family. In terms of assembly, the glycine cleavage system is composed of four proteins: P, T, L and H. It depends on (R)-lipoate as a cofactor.

Its function is as follows. The glycine cleavage system catalyzes the degradation of glycine. The H protein shuttles the methylamine group of glycine from the P protein to the T protein. In terms of biological role, is also involved in protein lipoylation via its role as an octanoyl/lipoyl carrier protein intermediate. This is Glycine cleavage system H protein from Bacillus cereus (strain ATCC 10987 / NRS 248).